The following is a 134-amino-acid chain: Arsenate reductase (134 aa).

Active-site nucleophile residues include Cys-11, Cys-83, and Cys-90. 2 disulfide bridges follow: Cys-11/Cys-83 and Cys-83/Cys-90.

It belongs to the low molecular weight phosphotyrosine protein phosphatase family. Thioredoxin-coupled ArsC subfamily.

The protein localises to the cytoplasm. The catalysed reaction is arsenate + [thioredoxin]-dithiol + H(+) = arsenite + [thioredoxin]-disulfide + H2O. Catalyzes the reduction of arsenate [As(V)] to arsenite [As(III)]. This is Arsenate reductase from Bacillus anthracis (strain A0248).